Here is a 460-residue protein sequence, read N- to C-terminus: uncharacterized protein (460 aa).

Residues 5–63 (TWHQGELIEVAIADLSDTGDGVGRFAERVVFVPDTVPGDRVLVRLLHVKPNYAHGKLHQ) form the TRAM domain. [4Fe-4S] cluster contacts are provided by C76, C82, C85, and C164. The S-adenosyl-L-methionine site is built by Q288, Y317, E338, and D383. C410 (nucleophile) is an active-site residue.

This sequence belongs to the class I-like SAM-binding methyltransferase superfamily. RNA M5U methyltransferase family.

This is an uncharacterized protein from Nostoc sp. (strain PCC 7120 / SAG 25.82 / UTEX 2576).